Consider the following 447-residue polypeptide: KICSTOR complex protein ITFG2 (447 aa).

An FG-GAP 1; atypical repeat occupies 19-48 (FPHAICLGDVDNDTLNELVVGDTSGKVSVY). Position 104 is a phosphoserine (Ser-104). An FG-GAP 2; atypical repeat occupies 126 to 155 (NTKVMLISDIDGDGCRELVVGYTDRVVRAF). Ser-220 is subject to Phosphoserine.

As to quaternary structure, part of the KICSTOR complex composed of KPTN, ITFG2, KICS2 and SZT2. SZT2 probably serves as a link between the other three proteins in the KICSTOR complex and may mediate the direct interaction with the GATOR complex via GATOR1. The KICSTOR complex interacts directly with the GATOR1 complex and most probably indirectly with the GATOR2 complex in an amino acid-independent manner.

The protein resides in the lysosome membrane. In terms of biological role, as part of the KICSTOR complex functions in the amino acid-sensing branch of the TORC1 signaling pathway. Recruits, in an amino acid-independent manner, the GATOR1 complex to the lysosomal membranes and allows its interaction with GATOR2 and the RAG GTPases. Functions upstream of the RAG GTPases and is required to negatively regulate mTORC1 signaling in absence of amino acids. In absence of the KICSTOR complex mTORC1 is constitutively localized to the lysosome and activated. The KICSTOR complex is also probably involved in the regulation of mTORC1 by glucose. This is KICSTOR complex protein ITFG2 from Homo sapiens (Human).